We begin with the raw amino-acid sequence, 385 residues long: MRKVLKKAALCTFGFSMLFGCASEEDTIVMAPVPVVQNQFEPTTEWTSSIGDGVGHYFSRLTPVYAYQKIYVASRDGLVKALDPENGKTIWERDLEQDDTARLSGGLTLTYGKVFIGSENGELITLDAETGEELWREKVDGEVLAKPLADEGYVMVHTSRGALIAFDAETGVEQWQINSEVPNLTLRGDSAPVSISGGVFWGMSNGRLAAALISKGQLLWQQPVGTPKGATEIDRLVDVDASPLILGSRLYTVGYNGQLIALDLRTGQPVWKRNYSSAMNMSSDGKRLFLVTEKDHVVAVDARSGTELWSNEELEYRQLTSPMIIDSYIVLADSEGYLHWLDRDTGLFMSQQEIDSDGIAVSPILVEDSFLVVTREGDIKKMRIK.

Residues 1–20 (MRKVLKKAALCTFGFSMLFG) form the signal peptide. Cys21 carries the N-palmitoyl cysteine lipid modification. Cys21 carries S-diacylglycerol cysteine lipidation.

This sequence belongs to the BamB family. As to quaternary structure, part of the Bam complex.

Its subcellular location is the cell outer membrane. Part of the outer membrane protein assembly complex, which is involved in assembly and insertion of beta-barrel proteins into the outer membrane. The polypeptide is Outer membrane protein assembly factor BamB (Aliivibrio fischeri (strain ATCC 700601 / ES114) (Vibrio fischeri)).